Consider the following 33-residue polypeptide: U1-pseudomyrmecitoxin-Pt1 subunit LS2 (33 aa).

The protein belongs to the myrmexin family. As to quaternary structure, heterodimer composed of subunit LS2 and subunit SS1, heterodimer composed of subunit LS2 and SS2, and heterodimer composed of subunit LS2 and SS3; disulfide-linked. As to expression, expressed by the venom gland.

The protein resides in the secreted. Functionally, this heterodimer may have anti-inflammatory properties, since the myrmexin complex (composed of 6 SS-LS heterodimers) inhibits carrageenin-induced edema in a dose-dependent manner (after subcutaneous injection into rats). The protein is U1-pseudomyrmecitoxin-Pt1 subunit LS2 of Pseudomyrmex triplarinus (Ant).